The sequence spans 260 residues: MGRPPPCAIQTWILLFLLMGAWAGLTRAQGSKILEGQECKPHSQPWQTALFQGERLVCGGVLVGDRWVLTAAHCKKDKYSVRLGDHSLQKRDEPEQEIQVARSIQHPCFNSSNPEDHSHDIMLIRLQNSANLGDKVKPIELANLCPKVGQKCIISGWGTVTSPQENFPNTLNCAEVKIYSQNKCERAYPGKITEGMVCAGSSNGADTCQGDSGGPLVCNGVLQGITTWGSDPCGKPEKPGVYTKICRYTNWIKKTMGKRD.

The N-terminal stretch at 1–28 (MGRPPPCAIQTWILLFLLMGAWAGLTRA) is a signal peptide. Positions 29–32 (QGSK) are excised as a propeptide. Positions 33-257 (ILEGQECKPH…YTNWIKKTMG (225 aa)) constitute a Peptidase S1 domain. Disulfide bonds link Cys39–Cys173, Cys58–Cys74, Cys145–Cys246, Cys152–Cys218, Cys184–Cys198, and Cys208–Cys233. His73 serves as the catalytic Charge relay system. Residue Asn110 is glycosylated (N-linked (GlcNAc...) asparagine). Residue Asp120 is the Charge relay system of the active site. The Charge relay system role is filled by Ser212.

The protein belongs to the peptidase S1 family. Kallikrein subfamily. As to quaternary structure, interacts with SPINK9. In terms of tissue distribution, restricted to hippocampus.

The protein localises to the secreted. It localises to the cytoplasm. The enzyme catalyses Cleavage of amide substrates following the basic amino acids Arg or Lys at the P1 position, with a preference for Arg over Lys.. In terms of biological role, serine protease which is capable of degrading a number of proteins such as casein, fibrinogen, kininogen, fibronectin and collagen type IV. Also cleaves L1CAM in response to increased neural activity. Induces neurite outgrowth and fasciculation of cultured hippocampal neurons. Plays a role in the formation and maturation of orphan and small synaptic boutons in the Schaffer-collateral pathway, regulates Schaffer-collateral long-term potentiation in the hippocampus and is required for memory acquisition and synaptic plasticity. Involved in skin desquamation and keratinocyte proliferation. Plays a role in the secondary phase of pathogenesis following spinal cord injury. This is Kallikrein-8 (Klk8) from Rattus norvegicus (Rat).